The sequence spans 397 residues: Methyltransferase/ribosomally synthesized type I borosin cyclic peptide precursor mroMa1 (397 aa).

Residues 1 to 246 form a methyltransferase domain region; sequence MALKKPGSLT…TTSTFYVPPR (246 aa). Residues Arg70, Tyr74, and Tyr96 contribute to the active site. Residues Tyr96, His98, Val101, Ala128, Gln170, Gly208, Ser239, and Thr240 each coordinate S-adenosyl-L-methionine. Residues 247-365 are clasp domain; sequence TPAPIDPKAV…GPIFVVMRQL (119 aa). Residues 366-388 are precursor leader; sequence PSAIASGQEPSQEEIARADDATA. Ile391 and Ile392 each carry N-methylisoleucine. Tyr393 carries the N-methyltyrosine modification. An N-methylisoleucine modification is found at Ile394. At Val395 the chain carries N-methylvaline.

It in the N-terminal section; belongs to the precorrin methyltransferase family. As to quaternary structure, homodimer. In terms of processing, mroMA automethylates at Ile-391, Ile-392, Tyr-393, Ile-394 and Val-395 before being processed by the a prolyloligopeptidase which likely forms a peptidyl ester upon removal of the follower propeptide, which then undergoes macrocyclization with the N-terminus of the modified core peptide. Peptide backbone alpha-N-methylations change the physicochemical properties of amide bonds to provide structural constraints and other favorable characteristics including biological membrane permeability to peptides.

It participates in secondary metabolite biosynthesis. Fusion protein of the methyltransferase mroM1 and a type I borosin core peptide; part of the gene cluster that mediates the biosynthesis of a type I borosin, a highly methylated cyclic peptide with potent biological activities. Type I borosins derive from the C-terminus of the fusion protein, and it is the same protein that methylates its own C-terminus using S-adenosyl methionine (SAM). The C-terminus is subsequently cleaved off and macrocyclized by a prolyloligopeptidase to give the final product. The chain is Methyltransferase/ribosomally synthesized type I borosin cyclic peptide precursor mroMa1 from Mycena rosella (Pink bonnet).